Consider the following 502-residue polypeptide: ATP synthase subunit alpha (502 aa).

Residues 115–135 (VDGLGPINTTNTRPIESPAPG) form a disordered region. Position 169-176 (169-176 (GDRQTGKT)) interacts with ATP.

This sequence belongs to the ATPase alpha/beta chains family. As to quaternary structure, F-type ATPases have 2 components, CF(1) - the catalytic core - and CF(0) - the membrane proton channel. CF(1) has five subunits: alpha(3), beta(3), gamma(1), delta(1), epsilon(1). CF(0) has three main subunits: a(1), b(2) and c(9-12). The alpha and beta chains form an alternating ring which encloses part of the gamma chain. CF(1) is attached to CF(0) by a central stalk formed by the gamma and epsilon chains, while a peripheral stalk is formed by the delta and b chains.

The protein resides in the cell membrane. It catalyses the reaction ATP + H2O + 4 H(+)(in) = ADP + phosphate + 5 H(+)(out). Produces ATP from ADP in the presence of a proton gradient across the membrane. The alpha chain is a regulatory subunit. The protein is ATP synthase subunit alpha of Bacillus anthracis (strain A0248).